The following is a 122-amino-acid chain: MGYGVCHFYLLFIINGAPQGLVTPSRGLRQGDPLSPYLFILCTEVLSGLCRRAQEQGRLPGIRVSNNSPRINHLLFADDTSSARWIPLAAQIWPIFFLSMRLFQGNPVNHPMSNLYFLGSLP.

The protein resides in the mitochondrion. This is an uncharacterized protein from Arabidopsis thaliana (Mouse-ear cress).